Consider the following 404-residue polypeptide: Odorant receptor 74a (404 aa).

The Cytoplasmic segment spans residues 1-38 (MSFHRYRPRLPGGELAPMPWPVSLYRVLNHVAWPLEAE). Residues 39 to 59 (SGRWTVFLDRLMIFLGFLVFC) form a helical membrane-spanning segment. The Extracellular portion of the chain corresponds to 60 to 67 (EHNEVDFH). Residues 68-88 (YLIANRQDMDNMLTGLPTYLI) form a helical membrane-spanning segment. Over 89 to 141 (LVEMQIRCFQLAWHKDRFRALLQRFYAEIYVSEEMEPHLFASIQRQMLATRVN) the chain is Cytoplasmic. A helical transmembrane segment spans residues 142 to 162 (STVYLLALLNFFLVPVTNVIY). Residues 163 to 181 (HRREMLYKQVYPFDNTQLH) are Extracellular-facing. A helical membrane pass occupies residues 182–202 (FFIPLLVLNFWVGFIITSMLF). At 203-274 (GELNVMGELM…QRVEKEFTLR (72 aa)) the chain is on the cytoplasmic side. A helical membrane pass occupies residues 275–295 (IFVMFAFSAGLLCALFFKAFT). The Extracellular segment spans residues 296–303 (NPWGNVAY). The chain crosses the membrane as a helical span at residues 304–324 (IVWFLAKFMELLALGMLGSIL). At 325 to 380 (LKTTDELGMMYYTADWEQVIHQSDNVGENVKLMKLVTLAIQLNSRPFFITGLNYFR) the chain is on the cytoplasmic side. A helical membrane pass occupies residues 381–401 (VSLTAVLKIIQGAFSYFTFLN). Topologically, residues 402–404 (SMR) are extracellular.

This sequence belongs to the insect chemoreceptor superfamily. Heteromeric odorant receptor channel (TC 1.A.69) family. Or1a subfamily. As to quaternary structure, interacts with Orco. Complexes exist early in the endomembrane system in olfactory sensory neurons (OSNs), coupling these complexes to the conserved ciliary trafficking pathway.

The protein resides in the cell membrane. Odorant receptor which mediates acceptance or avoidance behavior, depending on its substrates. The odorant receptor repertoire encodes a large collection of odor stimuli that vary widely in identity, intensity, and duration. May form a complex with Orco to form odorant-sensing units, providing sensitive and prolonged odorant signaling and calcium permeability. Involved in the behavioral responses to octanol, anisole, and 2-heptanone. The protein is Odorant receptor 74a (Or74a) of Drosophila melanogaster (Fruit fly).